A 196-amino-acid chain; its full sequence is UMP-CMP kinase (196 aa).

13–18 (GAGKGT) serves as a coordination point for ATP. Residue Ser33 is modified to Phosphoserine. Positions 33–63 (SAGELLRDERKNPDSQYGELIEKYIKEGKIV) are NMP. Arg39 is an a ribonucleoside 5'-phosphate binding site. Residues Lys43 and Lys55 each carry the N6-acetyllysine modification. 61–63 (KIV) contacts a ribonucleoside 5'-phosphate. A Glycyl lysine isopeptide (Lys-Gly) (interchain with G-Cter in SUMO2) cross-link involves residue Lys73. 93–96 (GFPR) serves as a coordination point for a ribonucleoside 5'-phosphate. A CMP-binding site is contributed by Asn100. At Lys106 the chain carries N6-succinyllysine. An LID region spans residues 133–143 (ERGKSSGRSDD). An ATP-binding site is contributed by Arg134. A ribonucleoside 5'-phosphate is bound by residues Arg140 and Arg151. Lys179 serves as a coordination point for ATP. Position 180 is a phosphoserine (Ser180).

Belongs to the adenylate kinase family. UMP-CMP kinase subfamily. Monomer. Mg(2+) serves as cofactor.

Its subcellular location is the nucleus. It is found in the cytoplasm. It catalyses the reaction CMP + ATP = CDP + ADP. It carries out the reaction dCMP + ATP = dCDP + ADP. The catalysed reaction is UMP + ATP = UDP + ADP. The enzyme catalyses a 2'-deoxyribonucleoside 5'-diphosphate + ATP = a 2'-deoxyribonucleoside 5'-triphosphate + ADP. It catalyses the reaction a ribonucleoside 5'-diphosphate + ATP = a ribonucleoside 5'-triphosphate + ADP. Catalyzes the phosphorylation of pyrimidine nucleoside monophosphates at the expense of ATP. Plays an important role in de novo pyrimidine nucleotide biosynthesis. Has preference for UMP and CMP as phosphate acceptors. Also displays broad nucleoside diphosphate kinase activity. In Rattus norvegicus (Rat), this protein is UMP-CMP kinase (Cmpk1).